The following is a 338-amino-acid chain: 4-hydroxythreonine-4-phosphate dehydrogenase (338 aa).

2 residues coordinate substrate: His-139 and Thr-140. A divalent metal cation is bound by residues His-169, His-214, and His-270. Substrate contacts are provided by Lys-278, Asn-287, and Arg-296.

The protein belongs to the PdxA family. Homodimer. It depends on Zn(2+) as a cofactor. Mg(2+) is required as a cofactor. Co(2+) serves as cofactor.

It localises to the cytoplasm. It carries out the reaction 4-(phosphooxy)-L-threonine + NAD(+) = 3-amino-2-oxopropyl phosphate + CO2 + NADH. Its pathway is cofactor biosynthesis; pyridoxine 5'-phosphate biosynthesis; pyridoxine 5'-phosphate from D-erythrose 4-phosphate: step 4/5. Catalyzes the NAD(P)-dependent oxidation of 4-(phosphooxy)-L-threonine (HTP) into 2-amino-3-oxo-4-(phosphooxy)butyric acid which spontaneously decarboxylates to form 3-amino-2-oxopropyl phosphate (AHAP). The sequence is that of 4-hydroxythreonine-4-phosphate dehydrogenase from Desulfosudis oleivorans (strain DSM 6200 / JCM 39069 / Hxd3) (Desulfococcus oleovorans).